Here is a 210-residue protein sequence, read N- to C-terminus: Na(+)-translocating NADH-quinone reductase subunit D (210 aa).

The next 5 helical transmembrane spans lie at 42–62 (FVMT…VSVI), 72–92 (IIVQ…ILKA), 103–123 (VFVG…AFAM), 131–151 (LIDG…VGFF), and 178–198 (NGLM…IWAI).

It belongs to the NqrDE/RnfAE family. In terms of assembly, composed of six subunits; NqrA, NqrB, NqrC, NqrD, NqrE and NqrF.

The protein localises to the cell inner membrane. The catalysed reaction is a ubiquinone + n Na(+)(in) + NADH + H(+) = a ubiquinol + n Na(+)(out) + NAD(+). In terms of biological role, NQR complex catalyzes the reduction of ubiquinone-1 to ubiquinol by two successive reactions, coupled with the transport of Na(+) ions from the cytoplasm to the periplasm. NqrA to NqrE are probably involved in the second step, the conversion of ubisemiquinone to ubiquinol. The polypeptide is Na(+)-translocating NADH-quinone reductase subunit D (Vibrio vulnificus (strain YJ016)).